The primary structure comprises 60 residues: Putative mercuric resistance protein (60 aa).

This Shigella flexneri protein is Putative mercuric resistance protein.